The chain runs to 308 residues: Pantothenate kinase (308 aa).

93–100 (GSVAVGKS) contacts ATP.

It belongs to the prokaryotic pantothenate kinase family.

The protein localises to the cytoplasm. The enzyme catalyses (R)-pantothenate + ATP = (R)-4'-phosphopantothenate + ADP + H(+). It functions in the pathway cofactor biosynthesis; coenzyme A biosynthesis; CoA from (R)-pantothenate: step 1/5. The polypeptide is Pantothenate kinase (Corynebacterium aurimucosum (strain ATCC 700975 / DSM 44827 / CIP 107346 / CN-1) (Corynebacterium nigricans)).